A 117-amino-acid polypeptide reads, in one-letter code: Large ribosomal subunit protein uL18 (117 aa).

Belongs to the universal ribosomal protein uL18 family. In terms of assembly, part of the 50S ribosomal subunit; part of the 5S rRNA/L5/L18/L25 subcomplex. Contacts the 5S and 23S rRNAs.

Its function is as follows. This is one of the proteins that bind and probably mediate the attachment of the 5S RNA into the large ribosomal subunit, where it forms part of the central protuberance. The chain is Large ribosomal subunit protein uL18 from Yersinia enterocolitica serotype O:8 / biotype 1B (strain NCTC 13174 / 8081).